The sequence spans 128 residues: MAYRKLGRTSSQRKAMLRDLTTDLLINESIVTTEARAKEIRKTVEKMITLGKRGDLHARRQAAAFVRNEIASENYDEATDKYTSTSALQKLFNEIAPRYAERNGGYTRILKTEPRRGDAAPMAIIELV.

It belongs to the bacterial ribosomal protein bL17 family. Part of the 50S ribosomal subunit. Contacts protein L32.

The sequence is that of Large ribosomal subunit protein bL17 from Streptococcus uberis (strain ATCC BAA-854 / 0140J).